The chain runs to 338 residues: DNA-directed RNA polymerase subunit alpha (338 aa).

The interval 1–226 (MLIAQRPTLT…ELFGLARELN (226 aa)) is alpha N-terminal domain (alpha-NTD). The tract at residues 243 to 338 (LAADLALPIE…DADYADEQYN (96 aa)) is alpha C-terminal domain (alpha-CTD).

The protein belongs to the RNA polymerase alpha chain family. Homodimer. The RNAP catalytic core consists of 2 alpha, 1 beta, 1 beta' and 1 omega subunit. When a sigma factor is associated with the core the holoenzyme is formed, which can initiate transcription.

The enzyme catalyses RNA(n) + a ribonucleoside 5'-triphosphate = RNA(n+1) + diphosphate. Its function is as follows. DNA-dependent RNA polymerase catalyzes the transcription of DNA into RNA using the four ribonucleoside triphosphates as substrates. The sequence is that of DNA-directed RNA polymerase subunit alpha from Beutenbergia cavernae (strain ATCC BAA-8 / DSM 12333 / CCUG 43141 / JCM 11478 / NBRC 16432 / NCIMB 13614 / HKI 0122).